The following is a 32-amino-acid chain: Potassium channel toxin alpha-KTx 10.6 (32 aa).

Disulfide bonds link Cys-3-Cys-22, Cys-8-Cys-27, and Cys-12-Cys-29.

In terms of tissue distribution, expressed by the venom gland.

Its subcellular location is the secreted. Blocks human voltage-gated potassium (Kv) channels Kv1.2/KCNA2 and Kv1.3/KCNA3. Does not block human Kv1.1 at 100nM concentration. This is Potassium channel toxin alpha-KTx 10.6 from Centruroides bonito (Scorpion).